Here is a 216-residue protein sequence, read N- to C-terminus: Sugar transporter SWEET1 (216 aa).

7 consecutive transmembrane segments (helical) span residues 3 to 23 (WMWL…SSGL), 36 to 56 (ENIQ…WFYY), 65 to 85 (LMIV…AYLL), 96 to 116 (QVLV…LWIL), 125 to 145 (LGLF…ADLA), 157 to 177 (SFPL…YGLV), and 181 to 201 (LYIT…FWLF). A MtN3/slv 1 domain is found at 6–90 (LLSGACIVFT…GAYLLYSPER (85 aa)). The MtN3/slv 2 domain occupies 124–206 (QLGLFCSVFT…RFWLFSQFPP (83 aa)).

It belongs to the SWEET sugar transporter family.

The protein localises to the golgi apparatus membrane. It localises to the cell membrane. Mediates sugar transport across membranes. This chain is Sugar transporter SWEET1 (slc50a1), found in Xenopus laevis (African clawed frog).